The sequence spans 878 residues: Phosphoenolpyruvate carboxylase (878 aa).

Residues His-140 and Lys-545 contribute to the active site.

It belongs to the PEPCase type 1 family. Mg(2+) serves as cofactor.

The enzyme catalyses oxaloacetate + phosphate = phosphoenolpyruvate + hydrogencarbonate. Functionally, forms oxaloacetate, a four-carbon dicarboxylic acid source for the tricarboxylic acid cycle. The chain is Phosphoenolpyruvate carboxylase from Pseudomonas syringae pv. tomato (strain ATCC BAA-871 / DC3000).